The sequence spans 305 residues: Phosphoribosylaminoimidazole-succinocarboxamide synthase (305 aa).

This sequence belongs to the SAICAR synthetase family.

It carries out the reaction 5-amino-1-(5-phospho-D-ribosyl)imidazole-4-carboxylate + L-aspartate + ATP = (2S)-2-[5-amino-1-(5-phospho-beta-D-ribosyl)imidazole-4-carboxamido]succinate + ADP + phosphate + 2 H(+). Its pathway is purine metabolism; IMP biosynthesis via de novo pathway; 5-amino-1-(5-phospho-D-ribosyl)imidazole-4-carboxamide from 5-amino-1-(5-phospho-D-ribosyl)imidazole-4-carboxylate: step 1/2. This is Phosphoribosylaminoimidazole-succinocarboxamide synthase from Polaromonas naphthalenivorans (strain CJ2).